The sequence spans 242 residues: ATP-dependent dethiobiotin synthetase BioD (242 aa).

Position 12–17 (12–17) interacts with ATP; the sequence is EVGKTV. A Mg(2+)-binding site is contributed by T16. The active site involves K37. S41 contributes to the substrate binding site. ATP is bound by residues D51 and 112–115; that span reads EGAG. Residues D51 and E112 each coordinate Mg(2+).

The protein belongs to the dethiobiotin synthetase family. As to quaternary structure, homodimer. The cofactor is Mg(2+).

It localises to the cytoplasm. The catalysed reaction is (7R,8S)-7,8-diammoniononanoate + CO2 + ATP = (4R,5S)-dethiobiotin + ADP + phosphate + 3 H(+). It participates in cofactor biosynthesis; biotin biosynthesis; biotin from 7,8-diaminononanoate: step 1/2. Functionally, catalyzes a mechanistically unusual reaction, the ATP-dependent insertion of CO2 between the N7 and N8 nitrogen atoms of 7,8-diaminopelargonic acid (DAPA, also called 7,8-diammoniononanoate) to form a ureido ring. The sequence is that of ATP-dependent dethiobiotin synthetase BioD from Bacillus cereus (strain B4264).